The sequence spans 99 residues: RNA-binding protein Hfq (99 aa).

The Sm domain maps to 9–68 (DPFLNALRRERVPVSIYLVNGIKLQGQIESFDQFVILLKNTVSQMVYKHAISTVVPSRPV). The segment at 64–99 (PSRPVSHHSNNPGGSNNYHGSNTTAQQQSQDADDAE) is disordered. Low complexity predominate over residues 70–93 (HHSNNPGGSNNYHGSNTTAQQQSQ).

The protein belongs to the Hfq family. Homohexamer.

In terms of biological role, RNA chaperone that binds small regulatory RNA (sRNAs) and mRNAs to facilitate mRNA translational regulation in response to envelope stress, environmental stress and changes in metabolite concentrations. Also binds with high specificity to tRNAs. This chain is RNA-binding protein Hfq, found in Pectobacterium atrosepticum (strain SCRI 1043 / ATCC BAA-672) (Erwinia carotovora subsp. atroseptica).